The chain runs to 273 residues: Hydroxyethylthiazole kinase (273 aa).

Met-47 contributes to the substrate binding site. ATP is bound by residues Arg-123 and Thr-172. Gly-199 lines the substrate pocket.

It belongs to the Thz kinase family. It depends on Mg(2+) as a cofactor.

The enzyme catalyses 5-(2-hydroxyethyl)-4-methylthiazole + ATP = 4-methyl-5-(2-phosphooxyethyl)-thiazole + ADP + H(+). Its pathway is cofactor biosynthesis; thiamine diphosphate biosynthesis; 4-methyl-5-(2-phosphoethyl)-thiazole from 5-(2-hydroxyethyl)-4-methylthiazole: step 1/1. Its function is as follows. Catalyzes the phosphorylation of the hydroxyl group of 4-methyl-5-beta-hydroxyethylthiazole (THZ). The protein is Hydroxyethylthiazole kinase of Ruminiclostridium cellulolyticum (strain ATCC 35319 / DSM 5812 / JCM 6584 / H10) (Clostridium cellulolyticum).